The chain runs to 176 residues: NAD(P)H-quinone oxidoreductase subunit 6, chloroplastic (176 aa).

A run of 5 helical transmembrane segments spans residues 10 to 30 (FLLV…VLFP), 32 to 52 (PIYS…FYIL), 61 to 81 (AQLL…VMFL), 105 to 125 (ISLF…GIIW), and 153 to 173 (FLPF…AIVI).

The protein belongs to the complex I subunit 6 family. NDH is composed of at least 16 different subunits, 5 of which are encoded in the nucleus.

The protein localises to the plastid. Its subcellular location is the chloroplast thylakoid membrane. The catalysed reaction is a plastoquinone + NADH + (n+1) H(+)(in) = a plastoquinol + NAD(+) + n H(+)(out). It catalyses the reaction a plastoquinone + NADPH + (n+1) H(+)(in) = a plastoquinol + NADP(+) + n H(+)(out). Its function is as follows. NDH shuttles electrons from NAD(P)H:plastoquinone, via FMN and iron-sulfur (Fe-S) centers, to quinones in the photosynthetic chain and possibly in a chloroplast respiratory chain. The immediate electron acceptor for the enzyme in this species is believed to be plastoquinone. Couples the redox reaction to proton translocation, and thus conserves the redox energy in a proton gradient. The sequence is that of NAD(P)H-quinone oxidoreductase subunit 6, chloroplastic (ndhG) from Ipomoea purpurea (Common morning glory).